We begin with the raw amino-acid sequence, 288 residues long: Proteasome assembly chaperone 1 (288 aa).

Residue Ala2 is modified to N-acetylalanine. The interval Pro13–Arg35 is disordered. Phosphothreonine is present on Thr18. Positions Glu26–Arg35 are enriched in basic and acidic residues. At Thr54 the chain carries Phosphothreonine. A Phosphoserine modification is found at Ser180. N6-acetyllysine is present on Lys264.

The protein belongs to the PSMG1 family. As to quaternary structure, forms a heterodimer with PSMG2. The PSMG1-PSMG2 heterodimer interacts directly with the PSMA5 and PSMA7 proteasome alpha subunits. In terms of processing, degraded by the proteasome upon completion of 20S proteasome maturation. In terms of tissue distribution, in the adult, detected in brain, colon, leukocytes, breast and testis. Widely expressed in the fetus. Also expressed in a variety of proliferating cell lines.

Its subcellular location is the cytoplasm. The protein localises to the endoplasmic reticulum. Its function is as follows. Chaperone protein which promotes assembly of the 20S proteasome as part of a heterodimer with PSMG2. The PSMG1-PSMG2 heterodimer binds to the PSMA5 and PSMA7 proteasome subunits, promotes assembly of the proteasome alpha subunits into the heteroheptameric alpha ring and prevents alpha ring dimerization. The protein is Proteasome assembly chaperone 1 of Homo sapiens (Human).